The chain runs to 347 residues: Major capsid protein (347 aa).

This sequence belongs to the T7virus major capsid protein family. In terms of assembly, homohexamer. Interacts with the connector protein and the minor capsid protein. Interacts with the capsid assembly scaffolding protein; capsid proteins and scaffolding proteins form building blocks that assemble to form the procapsid, each hexamer of the major capsid protein interacting with 2 scaffolding proteins.

It localises to the virion. Its function is as follows. Assembles with the minor capsid protein to form an icosahedral capsid with a T=7 symmetry, about 60 nm in diameter, and consisting of 415 capsid proteins. The major and minor capsid proteins are incorporated into the capsid in about a 90/10 ratio respectively. Once the capsid formed, encapsidates one single copy of the viral genome. The protein is Major capsid protein (10) of Escherichia coli (Bacteriophage T3).